The chain runs to 160 residues: Putative UPF0479 protein YIL177W-A (160 aa).

The next 2 helical transmembrane spans lie at 39-59 (IVFC…KVLQ) and 136-156 (VPMI…ISQH).

This sequence belongs to the UPF0479 family.

The protein localises to the membrane. The protein is Putative UPF0479 protein YIL177W-A of Saccharomyces cerevisiae (strain ATCC 204508 / S288c) (Baker's yeast).